Here is a 431-residue protein sequence, read N- to C-terminus: Adenylosuccinate synthetase (431 aa).

Residues 13–19 (GDEGKGK) and 41–43 (GHT) each bind GTP. The Proton acceptor role is filled by D14. Residues D14 and G41 each coordinate Mg(2+). IMP is bound by residues 14-17 (DEGK), 39-42 (NAGH), T130, R144, Q225, T240, and R304. The active-site Proton donor is the H42. Residue 300 to 306 (ATTGRAR) participates in substrate binding. Residues R306, 332 to 334 (KLD), and 414 to 416 (STG) each bind GTP.

The protein belongs to the adenylosuccinate synthetase family. Homodimer. Mg(2+) is required as a cofactor.

Its subcellular location is the cytoplasm. It carries out the reaction IMP + L-aspartate + GTP = N(6)-(1,2-dicarboxyethyl)-AMP + GDP + phosphate + 2 H(+). The protein operates within purine metabolism; AMP biosynthesis via de novo pathway; AMP from IMP: step 1/2. Functionally, plays an important role in the de novo pathway of purine nucleotide biosynthesis. Catalyzes the first committed step in the biosynthesis of AMP from IMP. The sequence is that of Adenylosuccinate synthetase from Chromohalobacter salexigens (strain ATCC BAA-138 / DSM 3043 / CIP 106854 / NCIMB 13768 / 1H11).